Here is a 314-residue protein sequence, read N- to C-terminus: Ribosomal protein L11 methyltransferase (314 aa).

Residues Thr161, Gly182, Asp204, and Asn248 each coordinate S-adenosyl-L-methionine.

Belongs to the methyltransferase superfamily. PrmA family.

It localises to the cytoplasm. It catalyses the reaction L-lysyl-[protein] + 3 S-adenosyl-L-methionine = N(6),N(6),N(6)-trimethyl-L-lysyl-[protein] + 3 S-adenosyl-L-homocysteine + 3 H(+). In terms of biological role, methylates ribosomal protein L11. This Listeria welshimeri serovar 6b (strain ATCC 35897 / DSM 20650 / CCUG 15529 / CIP 8149 / NCTC 11857 / SLCC 5334 / V8) protein is Ribosomal protein L11 methyltransferase.